The chain runs to 408 residues: Putative odorant receptor 92a (408 aa).

The Cytoplasmic portion of the chain corresponds to 1-52 (MLFRKRKPKSDDEVITFDELTRFPMTFYKTIGEDLYSDRDPNVIRRYLLRFY). Residues 53–73 (LVLGFLNFNAYVVGEIAYFIV) traverse the membrane as a helical segment. A topological domain (extracellular) is located at residue His74. Residues 75-95 (IMSTTTLLEATAVAPCIGFSF) traverse the membrane as a helical segment. The Cytoplasmic portion of the chain corresponds to 96-144 (MADFKQFGLTVNRKRLVRLLDDLKEIFPLDLEAQRKYNVSFYRKHMNRV). The helical transmembrane segment at 145–165 (MTLFTILCMTYTSSFSFYPAI) threads the bilayer. The Extracellular portion of the chain corresponds to 166–209 (KSTIKYYLMGSEIFERNYGFHILFPYDAETDLTVYWFSYWGLAH). A helical membrane pass occupies residues 210–230 (CAYVAGVSYVCVDLLLIATIT). Topologically, residues 231 to 276 (QLTMHFNFIANDLEAYEGGDHTDEENIKYLHNLVVYHARALDLSEE) are cytoplasmic. Residues 277 to 301 (VNNIFSFLILWNFIAASLVICFAGF) traverse the membrane as a helical segment. The Extracellular segment spans residues 302–310 (QITASNVED). A helical transmembrane segment spans residues 311–331 (IVLYFIFFSASLVQVFVVCYY). The Cytoplasmic segment spans residues 332-378 (GDEMISSSSRIGHSAFNQNWLPCSTKYKRILQFIIARSQKPASIRPP). A helical transmembrane segment spans residues 379–399 (TFPPISFNTFMKVISMSYQFF). The Extracellular segment spans residues 400–408 (ALLRTTYYG).

It belongs to the insect chemoreceptor superfamily. Heteromeric odorant receptor channel (TC 1.A.69) family. Or49a subfamily. In terms of assembly, interacts with Orco. Complexes exist early in the endomembrane system in olfactory sensory neurons (OSNs), coupling these complexes to the conserved ciliary trafficking pathway.

It localises to the cell membrane. Odorant receptor which mediates acceptance or avoidance behavior, depending on its substrates. The odorant receptor repertoire encodes a large collection of odor stimuli that vary widely in identity, intensity, and duration. May form a complex with Orco to form odorant-sensing units, providing sensitive and prolonged odorant signaling and calcium permeability. The polypeptide is Putative odorant receptor 92a (Or92a) (Drosophila melanogaster (Fruit fly)).